Here is an 864-residue protein sequence, read N- to C-terminus: Mitochondrial 15S rRNA processing factor CCM1 (864 aa).

Residues 1–76 constitute a mitochondrion transit peptide; that stretch reads MYMARCGPKN…REFSNTLKER (76 aa). PPR repeat units follow at residues 319 to 353 and 356 to 390; these read NKQN…STKH and DICT…NIKP.

This sequence belongs to the CCM1 family. As to quaternary structure, binds to mitochondrial small subunit 15S rRNA.

It is found in the mitochondrion. Its function is as follows. Regulates mitochondrial small subunit maturation by controlling 15S rRNA 5'-end processing. Localizes to the 5' precursor of the 15S rRNA in a position that is subsequently occupied by mS47 in the mature yeast mtSSU. Uses structure and sequence-specific RNA recognition, binding to a single-stranded region of the precursor and specifically recognizing bases -6 to -1. The exchange of Ccm1 for mS47 is coupled to the irreversible removal of precursor rRNA that is accompanied by conformational changes of the mitoribosomal proteins uS5m and mS26. These conformational changes signal completion of 5'-end rRNA processing through protection of the mature 5'-end of the 15S rRNA and stabilization of mS47. The removal of the 5' precursor together with the dissociation of Ccm1 may be catalyzed by the 5'-3' exoribonuclease Pet127. Involved in the specific removal of group I introns in mitochondrial encoded transcripts. The chain is Mitochondrial 15S rRNA processing factor CCM1 (CCM1) from Saccharomyces cerevisiae (strain Lalvin EC1118 / Prise de mousse) (Baker's yeast).